The chain runs to 41 residues: Large ribosomal subunit protein bL36 (41 aa).

It belongs to the bacterial ribosomal protein bL36 family.

This is Large ribosomal subunit protein bL36 from Vibrio vulnificus (strain YJ016).